We begin with the raw amino-acid sequence, 237 residues long: Uridylate kinase (237 aa).

ATP is bound at residue 9–12; sequence KLSG. An involved in allosteric activation by GTP region spans residues 17–22; that stretch reads GSQGYG. Position 51 (G51) interacts with UMP. Residues G52 and R56 each coordinate ATP. Residues D71 and 132–139 each bind UMP; that span reads CGNPFFTT. ATP contacts are provided by T159, Y165, and D168.

This sequence belongs to the UMP kinase family. As to quaternary structure, homohexamer.

It localises to the cytoplasm. The catalysed reaction is UMP + ATP = UDP + ADP. The protein operates within pyrimidine metabolism; CTP biosynthesis via de novo pathway; UDP from UMP (UMPK route): step 1/1. Its activity is regulated as follows. Allosterically activated by GTP. Inhibited by UTP. Its function is as follows. Catalyzes the reversible phosphorylation of UMP to UDP. This Synechococcus sp. (strain CC9605) protein is Uridylate kinase.